Reading from the N-terminus, the 211-residue chain is NADH-quinone oxidoreductase subunit I (211 aa).

Residues 1–27 (MANTDRPALPHKRAVPPSRADSGPRRR) are disordered. 4Fe-4S ferredoxin-type domains lie at 71–101 (LNRY…VEGA) and 117–146 (RVYQ…MTYD). 8 residues coordinate [4Fe-4S] cluster: C81, C84, C87, C91, C126, C129, C132, and C136.

Belongs to the complex I 23 kDa subunit family. NDH-1 is composed of 14 different subunits. Subunits NuoA, H, J, K, L, M, N constitute the membrane sector of the complex. It depends on [4Fe-4S] cluster as a cofactor.

It is found in the cell membrane. It carries out the reaction a quinone + NADH + 5 H(+)(in) = a quinol + NAD(+) + 4 H(+)(out). Functionally, NDH-1 shuttles electrons from NADH, via FMN and iron-sulfur (Fe-S) centers, to quinones in the respiratory chain. The immediate electron acceptor for the enzyme in this species is believed to be menaquinone. Couples the redox reaction to proton translocation (for every two electrons transferred, four hydrogen ions are translocated across the cytoplasmic membrane), and thus conserves the redox energy in a proton gradient. The polypeptide is NADH-quinone oxidoreductase subunit I (Mycobacterium tuberculosis (strain ATCC 25177 / H37Ra)).